Reading from the N-terminus, the 152-residue chain is Ribonuclease H (152 aa).

In terms of domain architecture, RNase H type-1 spans 6-147 (KKNRVIAYTD…ADELANKAIA (142 aa)). Asp-15, Glu-53, Asp-75, and Asp-139 together coordinate Mg(2+).

Belongs to the RNase H family. As to quaternary structure, monomer. It depends on Mg(2+) as a cofactor.

Its subcellular location is the cytoplasm. The enzyme catalyses Endonucleolytic cleavage to 5'-phosphomonoester.. Functionally, endonuclease that specifically degrades the RNA of RNA-DNA hybrids. This Francisella tularensis subsp. tularensis (strain FSC 198) protein is Ribonuclease H.